The chain runs to 451 residues: UPF0210 protein LMOf2365_0563 (451 aa).

It belongs to the UPF0210 family. Homodimer.

The sequence is that of UPF0210 protein LMOf2365_0563 from Listeria monocytogenes serotype 4b (strain F2365).